Reading from the N-terminus, the 206-residue chain is Thymidylate kinase (206 aa).

10–17 (GIDGAGKS) is an ATP binding site.

It belongs to the thymidylate kinase family.

The catalysed reaction is dTMP + ATP = dTDP + ADP. In terms of biological role, phosphorylation of dTMP to form dTDP in both de novo and salvage pathways of dTTP synthesis. The chain is Thymidylate kinase from Neisseria gonorrhoeae (strain ATCC 700825 / FA 1090).